Consider the following 386-residue polypeptide: MTQNHNIPTAIQIQNPINNNVSVTISDQLPKPSANNPNLLSVDTRPTHRKGHHHKHSLSHQYFLPPKNRQPLEIPASYPIPTFKETFAILTFPQKLKLTSSILFFLVAVGVLLSGDATILLTLSCSLIVEGVLIIINVWRETLDSFLVWRHTCLRYPFGMQQMELLVDFSFSILLIFLGMNLLKEPAEHAIEDWGNLHHAGDHEEETVHIHLTISLFASAIISGFALLLDHPSAHIRELNSRFFHGLTLVPSLILVLLLSLGYQVGSFLSHLLSLTIAVTALVNGFSIAKSLALMLLLTYSNKEKVFECVSLIKEDTRIDQLNYAAIWQPHYNTCIANIGLTVSGGEREQAAVREDIIRIIQKTVGSIFGAGVQPKWEISVDIQRA.

6 helical membrane passes run I102–T122, I128–V148, M163–L183, V208–L228, F243–Y263, and F268–I288.

The protein belongs to the cation diffusion facilitator (CDF) transporter (TC 2.A.4) family. SLC30A subfamily. In terms of assembly, interacts with cis4.

The protein localises to the cytoplasm. It is found in the nucleus membrane. Probable transporter involved in the regulation of zinc homeostasis. This Schizosaccharomyces pombe (strain 972 / ATCC 24843) (Fission yeast) protein is Probable zinc transporter zrg17 (zrg17).